Reading from the N-terminus, the 178-residue chain is MIITIGGLPGTGTTTTSKLISEKYGLNHVCAGFIFRDMAKERNMTLQEFSSYAETNTEVDNEIDRRQVEAAQSGDLILEGRLAGWILKKSDIKPDLSIWLKADPMVRCIRISERENENVDLALEKMISREASEKKRYKEIYNIEIDDLSIYDIVIESSKWDANGVFNIIEKAIENLKA.

7 to 15 is an ATP binding site; it reads GLPGTGTTT.

Belongs to the cytidylate kinase family. Type 2 subfamily.

It localises to the cytoplasm. The enzyme catalyses CMP + ATP = CDP + ADP. The catalysed reaction is dCMP + ATP = dCDP + ADP. This Methanococcus maripaludis (strain C7 / ATCC BAA-1331) protein is Cytidylate kinase.